Reading from the N-terminus, the 1226-residue chain is Receptor-type tyrosine-protein phosphatase O (1226 aa).

A signal peptide spans 1–29 (MGHLPRGTLGGRRLLPLLGLFVLLKIVTT). One can recognise a Fibronectin type-III 1 domain in the interval 30–115 (FHVAVQDDNN…TKPSRSITVL (86 aa)). Residues 30 to 832 (FHVAVQDDNN…VTEVNPNVVV (803 aa)) lie on the Extracellular side of the membrane. 3 N-linked (GlcNAc...) asparagine glycosylation sites follow: asparagine 75, asparagine 154, and asparagine 227. The disordered stretch occupies residues 242–305 (EPSGSFPEDS…PNSTDYESTS (64 aa)). The segment covering 260–270 (IGRDRRFHFPE) has biased composition (basic and acidic residues). Residues 277–291 (PSNVSSGSPPSNVSS) are compositionally biased toward low complexity. N-linked (GlcNAc...) asparagine glycosylation occurs at asparagine 279. Positions 296–305 (PNSTDYESTS) are enriched in polar residues. Fibronectin type-III domains are found at residues 339-435 (RTEK…ISPT), 445-541 (KPQH…IVPT), 542-638 (GIKD…TISF), 641-734 (APVA…LEPA), and 735-827 (PPKS…TEVN). N-linked (GlcNAc...) asparagine glycans are attached at residues asparagine 471 and asparagine 500. N-linked (GlcNAc...) asparagine glycans are attached at residues asparagine 710, asparagine 743, and asparagine 800. A helical membrane pass occupies residues 833-853 (ISVLAILSTLLIGLLLVTLVI). The Cytoplasmic segment spans residues 854–1226 (LRKKHLQMAR…DVIYENVSKS (373 aa)). Residue serine 875 is modified to Phosphoserine. Positions 948-1205 (FSLQFEELKL…IFIHQCVQLM (258 aa)) constitute a Tyrosine-protein phosphatase domain. Residues aspartate 1112, 1146-1152 (CSAGVGR), and glutamine 1190 each bind substrate. Catalysis depends on cysteine 1146, which acts as the Phosphocysteine intermediate. At tyrosine 1220 the chain carries Phosphotyrosine.

This sequence belongs to the protein-tyrosine phosphatase family. Receptor class 3 subfamily. In terms of assembly, interacts (phosphorylated form) with FYN and GRB2.

The protein resides in the membrane. The catalysed reaction is O-phospho-L-tyrosyl-[protein] + H2O = L-tyrosyl-[protein] + phosphate. Its function is as follows. Possesses tyrosine phosphatase activity. Plays a role in regulating the glomerular pressure/filtration rate relationship through an effect on podocyte structure and function. The polypeptide is Receptor-type tyrosine-protein phosphatase O (Ptpro) (Mus musculus (Mouse)).